Consider the following 333-residue polypeptide: MHLKPTRFFHANQPPMPHSYEMEDLCFDDMQYRWSPSNTPYRSMSRRYKSVSRSGPSMRVRSRTPCRRQTIRGKLMSKERSVYRHYFNYIARSPPEELATVRGLIVPIIKTTPVTLPFNLGQTVADNCLSLSGMGYHLGLGGYCPTCTASGEPRLCRTDRAALILAYVQQLNNIYEYRVFLASILALSDRANMQAASAEPLLSSVLAQPELFFMYHIMREGGMRDIRVLFYRDGDAGGFMMYVIFPGKSVHLHYRLIDHIQAACRGYKIVAHVWQTTFLLSVCRNPEQQTETVVPSIGTSDVYCKMCDLNFDGELLLEYKRLYALFDDFVPPR.

Positions 45–64 are disordered; that stretch reads SRRYKSVSRSGPSMRVRSRT. A CCCH-type zinc finger spans residues 128 to 251; that stretch reads CLSLSGMGYH…YVIFPGKSVH (124 aa).

This sequence belongs to the herpesviridae NEC1 protein family. Forms a heterohexameric complex with NEC2. Interacts with capsid vertex specific component 2/CVC2; this interaction directs the capsid to the host inner nuclear membrane to initiate budding. In terms of processing, phosphorylated at serine residues in the N-terminus. This phosphorylation regulates the localization within the inner nuclear membrane.

It is found in the host nucleus inner membrane. Functionally, plays an essential role in virion nuclear egress, the first step of virion release from infected cell. Within the host nucleus, NEC1 interacts with the newly formed capsid through the vertexes and directs it to the inner nuclear membrane by associating with NEC2. Induces the budding of the capsid at the inner nuclear membrane as well as its envelopment into the perinuclear space. There, the NEC1/NEC2 complex promotes the fusion of the enveloped capsid with the outer nuclear membrane and the subsequent release of the viral capsid into the cytoplasm where it will reach the secondary budding sites in the host Golgi or trans-Golgi network. The polypeptide is Nuclear egress protein 1 (Varicella-zoster virus (strain Dumas) (HHV-3)).